A 264-amino-acid chain; its full sequence is NAD kinase (264 aa).

Residue Asp45 is the Proton acceptor of the active site. NAD(+) contacts are provided by residues 45 to 46 (DG), His50, 121 to 122 (NE), Arg147, Asp149, Ala184, and Gln224.

Belongs to the NAD kinase family. A divalent metal cation is required as a cofactor.

Its subcellular location is the cytoplasm. The enzyme catalyses NAD(+) + ATP = ADP + NADP(+) + H(+). Functionally, involved in the regulation of the intracellular balance of NAD and NADP, and is a key enzyme in the biosynthesis of NADP. Catalyzes specifically the phosphorylation on 2'-hydroxyl of the adenosine moiety of NAD to yield NADP. The sequence is that of NAD kinase from Lysinibacillus sphaericus (strain C3-41).